The sequence spans 725 residues: Threonine--tRNA ligase, cytoplasmic (725 aa).

The TGS domain maps to E80–K142.

It belongs to the class-II aminoacyl-tRNA synthetase family.

It localises to the cytoplasm. The enzyme catalyses tRNA(Thr) + L-threonine + ATP = L-threonyl-tRNA(Thr) + AMP + diphosphate + H(+). The protein is Threonine--tRNA ligase, cytoplasmic of Caenorhabditis elegans.